We begin with the raw amino-acid sequence, 567 residues long: Dihydroxy-acid dehydratase (567 aa).

Cys57 serves as a coordination point for [2Fe-2S] cluster. Asp89 contacts Mg(2+). Cys130 serves as a coordination point for [2Fe-2S] cluster. Positions 131 and 132 each coordinate Mg(2+). Lys132 is modified (N6-carboxylysine). Cys202 is a binding site for [2Fe-2S] cluster. Glu453 contributes to the Mg(2+) binding site. Ser479 (proton acceptor) is an active-site residue.

This sequence belongs to the IlvD/Edd family. As to quaternary structure, homodimer. It depends on [2Fe-2S] cluster as a cofactor. Mg(2+) is required as a cofactor.

The enzyme catalyses (2R)-2,3-dihydroxy-3-methylbutanoate = 3-methyl-2-oxobutanoate + H2O. It carries out the reaction (2R,3R)-2,3-dihydroxy-3-methylpentanoate = (S)-3-methyl-2-oxopentanoate + H2O. It functions in the pathway amino-acid biosynthesis; L-isoleucine biosynthesis; L-isoleucine from 2-oxobutanoate: step 3/4. It participates in amino-acid biosynthesis; L-valine biosynthesis; L-valine from pyruvate: step 3/4. Functions in the biosynthesis of branched-chain amino acids. Catalyzes the dehydration of (2R,3R)-2,3-dihydroxy-3-methylpentanoate (2,3-dihydroxy-3-methylvalerate) into 2-oxo-3-methylpentanoate (2-oxo-3-methylvalerate) and of (2R)-2,3-dihydroxy-3-methylbutanoate (2,3-dihydroxyisovalerate) into 2-oxo-3-methylbutanoate (2-oxoisovalerate), the penultimate precursor to L-isoleucine and L-valine, respectively. This Nocardioides sp. (strain ATCC BAA-499 / JS614) protein is Dihydroxy-acid dehydratase.